We begin with the raw amino-acid sequence, 271 residues long: Histone chaperone asf-1 (271 aa).

A disordered region spans residues 152 to 271 (KWDSEASAPP…PKQQGMAMAQ (120 aa)). 2 stretches are compositionally biased toward acidic residues: residues 168 to 185 (PEAD…DELA) and 211 to 258 (IEED…EMEI).

Belongs to the ASF1 family. In terms of assembly, interacts with histone H3 and histone H4.

The protein resides in the nucleus. Functionally, histone chaperone that facilitates histone deposition and histone exchange and removal during nucleosome assembly and disassembly. The protein is Histone chaperone asf-1 (asf-1) of Neurospora crassa (strain ATCC 24698 / 74-OR23-1A / CBS 708.71 / DSM 1257 / FGSC 987).